Reading from the N-terminus, the 417-residue chain is Cysteate synthase (417 aa).

Lys-102 bears the N6-(pyridoxal phosphate)lysine mark. The pyridoxal 5'-phosphate site is built by Asn-128 and Thr-380.

The protein belongs to the threonine synthase family. Cysteate synthase subfamily. As to quaternary structure, homotrimer. Requires pyridoxal 5'-phosphate as cofactor.

The catalysed reaction is O-phospho-L-serine + sulfite + H(+) = L-cysteate + phosphate. It participates in cofactor biosynthesis; coenzyme M biosynthesis. Functionally, specifically catalyzes the beta-elimination of phosphate from L-phosphoserine and the beta-addition of sulfite to the dehydroalanine intermediate to produce L-cysteate. The sequence is that of Cysteate synthase from Methanocella arvoryzae (strain DSM 22066 / NBRC 105507 / MRE50).